The chain runs to 316 residues: Epiphycan (316 aa).

The signal sequence occupies residues 1–23 (MKTFVNIFLGFFIFESVGAVPIT). An O-linked (Xyl...) (dermatan sulfate) serine glycan is attached at serine 98. An LRRNT domain is found at 100-137 (VLVPQTQDGLPTCLLCTCLGTTVYCDDRELDAVPPLPK). A disulfide bridge links cysteine 112 with cysteine 124. LRR repeat units lie at residues 138–159 (NTMY…DFAN), 162–183 (NLKR…AFRR), 186–207 (QLLE…PSTL), 232–252 (ELQH…PLPE), 253–274 (SLQA…TFCK), and 284–304 (ALED…PYAY). Cysteines 273 and 306 form a disulfide. N-linked (GlcNAc...) asparagine glycosylation is present at asparagine 296.

The protein belongs to the small leucine-rich proteoglycan (SLRP) family. SLRP class III subfamily. Post-translationally, the O-linked glycosaminoglycan chain(s) are dermatan sulfate. Preferentially expressed in flattened chondrocytes of developing chick limb cartilage. Also found in the cartilage peripheral zone bordering with bone marrow cavity.

It localises to the secreted. It is found in the extracellular space. The protein resides in the extracellular matrix. In terms of biological role, may have a role in bone formation and also in establishing the ordered structure of cartilage through matrix organization. This chain is Epiphycan (EPYC), found in Gallus gallus (Chicken).